The primary structure comprises 148 residues: Macrodomain Ter protein (148 aa).

Belongs to the MatP family. Homodimer.

It localises to the cytoplasm. Its function is as follows. Required for spatial organization of the terminus region of the chromosome (Ter macrodomain) during the cell cycle. Prevents early segregation of duplicated Ter macrodomains during cell division. Binds specifically to matS, which is a 13 bp signature motif repeated within the Ter macrodomain. The protein is Macrodomain Ter protein of Photobacterium profundum (strain SS9).